The primary structure comprises 407 residues: [Pyruvate dehydrogenase (acetyl-transferring)] kinase isozyme 2, mitochondrial (407 aa).

The Histidine kinase domain occupies 135–364 (LEYKDTYGDD…DAVIYLKALS (230 aa)). Phosphotyrosine is present on residues tyrosine 215 and tyrosine 216. Residues 251–258 (ELFKNAMR), aspartate 290, 309–310 (ST), and 325–330 (GFGYGL) each bind ATP. At lysine 376 the chain carries N6-succinyllysine.

The protein belongs to the PDK/BCKDK protein kinase family. Homodimer, and heterodimer with PDK1. Interacts with the pyruvate dehydrogenase complex subunit DLAT, and is part of the multimeric pyruvate dehydrogenase complex that contains multiple copies of pyruvate dehydrogenase (E1), dihydrolipoamide acetyltransferase (DLAT, E2) and lipoamide dehydrogenase (DLD, E3). As to expression, detected in heart (at protein level).

The protein localises to the mitochondrion matrix. It carries out the reaction L-seryl-[pyruvate dehydrogenase E1 alpha subunit] + ATP = O-phospho-L-seryl-[pyruvate dehydrogenase E1 alpha subunit] + ADP + H(+). Functionally, kinase that plays a key role in the regulation of glucose and fatty acid metabolism and homeostasis via phosphorylation of the pyruvate dehydrogenase subunits PDHA1 and PDHA2. This inhibits pyruvate dehydrogenase activity, and thereby regulates metabolite flux through the tricarboxylic acid cycle, down-regulates aerobic respiration and inhibits the formation of acetyl-coenzyme A from pyruvate. Inhibition of pyruvate dehydrogenase decreases glucose utilization and increases fat metabolism. Mediates cellular responses to insulin. Plays an important role in maintaining normal blood glucose levels and in metabolic adaptation to nutrient availability. Via its regulation of pyruvate dehydrogenase activity, plays an important role in maintaining normal blood pH and in preventing the accumulation of ketone bodies under starvation. Plays a role in the regulation of cell proliferation and in resistance to apoptosis under oxidative stress. Plays a role in p53/TP53-mediated apoptosis. This Mus musculus (Mouse) protein is [Pyruvate dehydrogenase (acetyl-transferring)] kinase isozyme 2, mitochondrial (Pdk2).